A 138-amino-acid polypeptide reads, in one-letter code: Large ribosomal subunit protein bL17 (138 aa).

It belongs to the bacterial ribosomal protein bL17 family. In terms of assembly, part of the 50S ribosomal subunit. Contacts protein L32.

The sequence is that of Large ribosomal subunit protein bL17 from Solidesulfovibrio magneticus (strain ATCC 700980 / DSM 13731 / RS-1) (Desulfovibrio magneticus).